Here is a 336-residue protein sequence, read N- to C-terminus: Foldase protein PrsA (336 aa).

The N-terminal stretch at 1-22 (MKSAKKLLSVLCLGIFILTFTA) is a signal peptide. Residue cysteine 23 is the site of N-palmitoyl cysteine attachment. A lipid anchor (S-diacylglycerol cysteine) is attached at cysteine 23. The PpiC domain occupies 194 to 286 (PNTMNVSHIL…FGYHIIKINS (93 aa)).

This sequence belongs to the PrsA family.

It is found in the cell membrane. It carries out the reaction [protein]-peptidylproline (omega=180) = [protein]-peptidylproline (omega=0). In terms of biological role, plays a major role in protein secretion by helping the post-translocational extracellular folding of several secreted proteins. The sequence is that of Foldase protein PrsA from Clostridium botulinum (strain Kyoto / Type A2).